Consider the following 202-residue polypeptide: Holliday junction branch migration complex subunit RuvA (202 aa).

The tract at residues 1–64 (MIGRLRGSLA…EDAHLLYGFY (64 aa)) is domain I. The interval 65–143 (EKRERELFRE…AWESLPGTFT (79 aa)) is domain II. The tract at residues 144 to 153 (LVSNGPNQAE) is flexible linker. The interval 154 to 202 (PVASAESDAVSALISLGYKPQEASKAVSAIKEKDLSSADLIRRALKGMG) is domain III.

Belongs to the RuvA family. As to quaternary structure, homotetramer. Forms an RuvA(8)-RuvB(12)-Holliday junction (HJ) complex. HJ DNA is sandwiched between 2 RuvA tetramers; dsDNA enters through RuvA and exits via RuvB. An RuvB hexamer assembles on each DNA strand where it exits the tetramer. Each RuvB hexamer is contacted by two RuvA subunits (via domain III) on 2 adjacent RuvB subunits; this complex drives branch migration. In the full resolvosome a probable DNA-RuvA(4)-RuvB(12)-RuvC(2) complex forms which resolves the HJ.

It localises to the cytoplasm. The RuvA-RuvB-RuvC complex processes Holliday junction (HJ) DNA during genetic recombination and DNA repair, while the RuvA-RuvB complex plays an important role in the rescue of blocked DNA replication forks via replication fork reversal (RFR). RuvA specifically binds to HJ cruciform DNA, conferring on it an open structure. The RuvB hexamer acts as an ATP-dependent pump, pulling dsDNA into and through the RuvAB complex. HJ branch migration allows RuvC to scan DNA until it finds its consensus sequence, where it cleaves and resolves the cruciform DNA. The chain is Holliday junction branch migration complex subunit RuvA from Pseudomonas savastanoi pv. phaseolicola (strain 1448A / Race 6) (Pseudomonas syringae pv. phaseolicola (strain 1448A / Race 6)).